The following is an 87-amino-acid chain: MAVSVLRLTVVLGLLVLFLTCYADDKPDKPDDKPDDSGKDPKPDFPKFLSLLGTEIIENAVEFILRSMSRSTGFMEFDDNEGKHSSK.

Residues 1–23 form the signal peptide; the sequence is MAVSVLRLTVVLGLLVLFLTCYA. A disordered region spans residues 24–44; that stretch reads DDKPDKPDDKPDDSGKDPKPD.

The protein resides in the secreted. This is an uncharacterized protein from Homo sapiens (Human).